The primary structure comprises 435 residues: Serine--tRNA ligase (435 aa).

Position 234-236 (234-236 (TAE)) interacts with L-serine. ATP is bound at residue 265–267 (RRE). Residue Glu-288 coordinates L-serine. 352–355 (EISS) provides a ligand contact to ATP. Ser-388 lines the L-serine pocket.

Belongs to the class-II aminoacyl-tRNA synthetase family. Type-1 seryl-tRNA synthetase subfamily. As to quaternary structure, homodimer. The tRNA molecule binds across the dimer.

The protein resides in the cytoplasm. It carries out the reaction tRNA(Ser) + L-serine + ATP = L-seryl-tRNA(Ser) + AMP + diphosphate + H(+). The catalysed reaction is tRNA(Sec) + L-serine + ATP = L-seryl-tRNA(Sec) + AMP + diphosphate + H(+). It functions in the pathway aminoacyl-tRNA biosynthesis; selenocysteinyl-tRNA(Sec) biosynthesis; L-seryl-tRNA(Sec) from L-serine and tRNA(Sec): step 1/1. Catalyzes the attachment of serine to tRNA(Ser). Is also able to aminoacylate tRNA(Sec) with serine, to form the misacylated tRNA L-seryl-tRNA(Sec), which will be further converted into selenocysteinyl-tRNA(Sec). The sequence is that of Serine--tRNA ligase from Synechococcus sp. (strain JA-3-3Ab) (Cyanobacteria bacterium Yellowstone A-Prime).